The primary structure comprises 49 residues: Disintegrin eristostatin (49 aa).

The Disintegrin domain occupies 1–49 (QEEPCATGPCCRRCKFKRAGKVCRVARGDWNDDYCTGKSCDCPKNPWNG). 4 cysteine pairs are disulfide-bonded: C5–C14, C10–C35, C11–C40, and C23–C42. A Cell attachment site motif is present at residues 27 to 29 (RGD).

Belongs to the venom metalloproteinase (M12B) family. P-II subfamily. P-IIa sub-subfamily. Monomer. Expressed by the venom gland.

It localises to the secreted. Is a potent inhibitor of ADP-induced platelet aggregation. Acts by binding to alpha-IIb/beta-3 (ITGA2B/ITGB3) receptor on the platelet surface. Binds with the same high affinity to resting and activated platelets. Also binds the alpha-4/beta-1 (ITGA4/ITGB1) integrin. Is a potent inhibitor of human and murine melanoma metastases in mouse model systems, also due to the inhibition of binding between the alpha-4/beta-1 integrin and the vascular cell adhesion protein VCAM1. Reacts neither with the integrin alpha-V/beta-3 (ITGAV/ITGB3) vitronectin receptor nor with the integrin alpha-5/beta-1 (ITGA5/ITGB1) fibronectin receptor. Has no effect on cell proliferation or angiogenesis. Specifically inhibits cell migration on fibronectin, but not that on collagen IV or laminin. May involve fibronectin-binding integrins that mediate cell migration. In Eristicophis macmahoni (Leaf-nosed viper), this protein is Disintegrin eristostatin.